A 216-amino-acid chain; its full sequence is MTDSSISPSHPAGLSRALDNFLTRHRIGVWRVVVTFVLASLLFGHSRWDGTWVSPLLLTLGMLGVSLATVGRLWCALYISGRKNNTLVTSGPYSLCRHPLYVCNLLGILGLGAMTESLAVTAVLALAFALMYPAVIRTEDRFLASAFPEFAEYARRTPAFFPRLSLYRGESTWTVHVSSFQRNIADSVWFLGLSVVVESFDLFHDAGVLRAVVTLA.

3 helical membrane-spanning segments follow: residues 27–47 (IGVW…GHSR), 50–70 (GTWV…LATV), and 116–136 (ESLA…PAVI).

This sequence to A.xylosoxydans NccN.

The protein resides in the cell inner membrane. Component of the CZC cation-efflux system that confers resistance to cobalt, zinc and cadmium. This chain is Cobalt-zinc-cadmium resistance protein CzcN (czcN), found in Cupriavidus metallidurans (strain ATCC 43123 / DSM 2839 / NBRC 102507 / CH34) (Ralstonia metallidurans).